Reading from the N-terminus, the 560-residue chain is Membrane protein insertase YidC (560 aa).

Helical transmembrane passes span 7–27 (NLIA…YFVV), 334–354 (AIDF…MNFF), 357–377 (YVGN…LLMF), 431–451 (LPIL…YVTI), 476–496 (LFGF…WPIL), and 522–542 (FMPL…LIYW).

It belongs to the OXA1/ALB3/YidC family. Type 1 subfamily. In terms of assembly, interacts with the Sec translocase complex via SecD. Specifically interacts with transmembrane segments of nascent integral membrane proteins during membrane integration.

The protein resides in the cell inner membrane. Functionally, required for the insertion and/or proper folding and/or complex formation of integral membrane proteins into the membrane. Involved in integration of membrane proteins that insert both dependently and independently of the Sec translocase complex, as well as at least some lipoproteins. Aids folding of multispanning membrane proteins. The polypeptide is Membrane protein insertase YidC (Rickettsia canadensis (strain McKiel)).